Here is a 37-residue protein sequence, read N- to C-terminus: Large ribosomal subunit protein bL36c (37 aa).

It belongs to the bacterial ribosomal protein bL36 family.

The protein resides in the plastid. It localises to the chloroplast. This Pisum sativum (Garden pea) protein is Large ribosomal subunit protein bL36c (rpl36).